The primary structure comprises 347 residues: Queuosine 5'-phosphate N-glycosylase/hydrolase (347 aa).

His-53, Phe-237, Asp-239, Asp-321, and Asp-326 together coordinate queuine. Asp-239 (nucleophile or transition state stabilizer) is an active-site residue.

It belongs to the QNG1 protein family.

It carries out the reaction queuosine 5'-phosphate + H2O = queuine + D-ribose 5-phosphate. Catalyzes the hydrolysis of queuosine 5'-phosphate, releasing the nucleobase queuine (q). Is required for salvage of queuine from exogenous queuosine (Q) that is imported and then converted to queuosine 5'-phosphate intracellularly. The chain is Queuosine 5'-phosphate N-glycosylase/hydrolase from Nematostella vectensis (Starlet sea anemone).